The following is a 230-amino-acid chain: Large ribosomal subunit protein uL1 (230 aa).

It belongs to the universal ribosomal protein uL1 family. Part of the 50S ribosomal subunit.

Binds directly to 23S rRNA. The L1 stalk is quite mobile in the ribosome, and is involved in E site tRNA release. Functionally, protein L1 is also a translational repressor protein, it controls the translation of the L11 operon by binding to its mRNA. In Acidithiobacillus ferrooxidans (strain ATCC 53993 / BNL-5-31) (Leptospirillum ferrooxidans (ATCC 53993)), this protein is Large ribosomal subunit protein uL1.